The chain runs to 425 residues: Glutamyl-tRNA reductase (425 aa).

Residues T49 to R52, S109, E114 to Q116, and Q120 each bind substrate. C50 functions as the Nucleophile in the catalytic mechanism. Residue G189–G194 participates in NADP(+) binding.

This sequence belongs to the glutamyl-tRNA reductase family. As to quaternary structure, homodimer.

It carries out the reaction (S)-4-amino-5-oxopentanoate + tRNA(Glu) + NADP(+) = L-glutamyl-tRNA(Glu) + NADPH + H(+). It functions in the pathway porphyrin-containing compound metabolism; protoporphyrin-IX biosynthesis; 5-aminolevulinate from L-glutamyl-tRNA(Glu): step 1/2. It participates in porphyrin-containing compound metabolism; chlorophyll biosynthesis. In terms of biological role, catalyzes the NADPH-dependent reduction of glutamyl-tRNA(Glu) to glutamate 1-semialdehyde (GSA). This Chlorobium luteolum (strain DSM 273 / BCRC 81028 / 2530) (Pelodictyon luteolum) protein is Glutamyl-tRNA reductase.